The sequence spans 476 residues: Siroheme synthase (476 aa).

Residues 1–203 (MHYFPVFADL…RQTEAAKKEL (203 aa)) form a precorrin-2 dehydrogenase /sirohydrochlorin ferrochelatase region. NAD(+) contacts are provided by residues 22 to 23 (GV) and 43 to 44 (QK). The residue at position 128 (serine 128) is a Phosphoserine. A uroporphyrinogen-III C-methyltransferase region spans residues 214–476 (GFVSLVGAGP…LDSLRIESVA (263 aa)). An S-adenosyl-L-methionine-binding site is contributed by proline 223. Aspartate 246 serves as the catalytic Proton acceptor. Lysine 268 functions as the Proton donor in the catalytic mechanism. Residues 299 to 301 (GGD), valine 304, 329 to 330 (TA), methionine 381, and glycine 410 each bind S-adenosyl-L-methionine.

It in the N-terminal section; belongs to the precorrin-2 dehydrogenase / sirohydrochlorin ferrochelatase family. This sequence in the C-terminal section; belongs to the precorrin methyltransferase family.

The enzyme catalyses uroporphyrinogen III + 2 S-adenosyl-L-methionine = precorrin-2 + 2 S-adenosyl-L-homocysteine + H(+). It catalyses the reaction precorrin-2 + NAD(+) = sirohydrochlorin + NADH + 2 H(+). The catalysed reaction is siroheme + 2 H(+) = sirohydrochlorin + Fe(2+). It participates in cofactor biosynthesis; adenosylcobalamin biosynthesis; precorrin-2 from uroporphyrinogen III: step 1/1. It functions in the pathway cofactor biosynthesis; adenosylcobalamin biosynthesis; sirohydrochlorin from precorrin-2: step 1/1. The protein operates within porphyrin-containing compound metabolism; siroheme biosynthesis; precorrin-2 from uroporphyrinogen III: step 1/1. Its pathway is porphyrin-containing compound metabolism; siroheme biosynthesis; siroheme from sirohydrochlorin: step 1/1. It participates in porphyrin-containing compound metabolism; siroheme biosynthesis; sirohydrochlorin from precorrin-2: step 1/1. Functionally, multifunctional enzyme that catalyzes the SAM-dependent methylations of uroporphyrinogen III at position C-2 and C-7 to form precorrin-2 via precorrin-1. Then it catalyzes the NAD-dependent ring dehydrogenation of precorrin-2 to yield sirohydrochlorin. Finally, it catalyzes the ferrochelation of sirohydrochlorin to yield siroheme. This chain is Siroheme synthase, found in Actinobacillus succinogenes (strain ATCC 55618 / DSM 22257 / CCUG 43843 / 130Z).